The chain runs to 96 residues: MAAAWREGDDLLLRLYIQPKASRDSIVGLHGEELKVAITAPPIDGKANAHLSKYLAKLCKVAKGSVVVEKGELGRHKQVRILQPSQIPAEIAALIE.

The protein belongs to the UPF0235 family.

The polypeptide is UPF0235 protein VC_0458 (Vibrio cholerae serotype O1 (strain ATCC 39315 / El Tor Inaba N16961)).